The chain runs to 122 residues: Immunoglobulin lambda variable 4-3 (122 aa).

A signal peptide spans 1–19 (MAWVSFYLLPFIFSTGLCA). Positions 20–44 (LPVLTQPPSASALLGASIKLTCTLS) are framework-1. Residues 21 to 122 (PVLTQPPSAS…ESHTIDGQVG (102 aa)) form the Ig-like domain. Cys41 and Cys111 are oxidised to a cystine. The segment at 45–51 (SEHSTYT) is complementarity-determining-1. The segment at 52–68 (IEWYQQRPGRSPQYIMK) is framework-2. The tract at residues 69–75 (VKSDGSH) is complementarity-determining-2. The framework-3 stretch occupies residues 76–111 (SKGDGIPDRFMGSSSGADRYLTFSNLQSDDEAEYHC). The tract at residues 112–122 (GESHTIDGQVG) is complementarity-determining-3.

Immunoglobulins are composed of two identical heavy chains and two identical light chains; disulfide-linked.

It is found in the secreted. It localises to the cell membrane. In terms of biological role, v region of the variable domain of immunoglobulin light chains that participates in the antigen recognition. Immunoglobulins, also known as antibodies, are membrane-bound or secreted glycoproteins produced by B lymphocytes. In the recognition phase of humoral immunity, the membrane-bound immunoglobulins serve as receptors which, upon binding of a specific antigen, trigger the clonal expansion and differentiation of B lymphocytes into immunoglobulins-secreting plasma cells. Secreted immunoglobulins mediate the effector phase of humoral immunity, which results in the elimination of bound antigens. The antigen binding site is formed by the variable domain of one heavy chain, together with that of its associated light chain. Thus, each immunoglobulin has two antigen binding sites with remarkable affinity for a particular antigen. The variable domains are assembled by a process called V-(D)-J rearrangement and can then be subjected to somatic hypermutations which, after exposure to antigen and selection, allow affinity maturation for a particular antigen. The polypeptide is Immunoglobulin lambda variable 4-3 (Homo sapiens (Human)).